We begin with the raw amino-acid sequence, 442 residues long: Methionine aminopeptidase 2-1 (442 aa).

The tract at residues 1–92 (MAAQASEELE…ISELFPNNQY (92 aa)) is disordered. Residues 15–25 (NGQNGHAQEQV) show a composition bias toward polar residues. Positions 30 to 47 (EAADNDDSEDDEKEEEGG) are enriched in acidic residues. The span at 56 to 72 (AKKKKKRKPKKKKKGGA) shows a compositional bias: basic residues. His195 contacts substrate. A divalent metal cation-binding residues include Asp215, Asp226, and His295. His303 provides a ligand contact to substrate. A divalent metal cation is bound by residues Glu328 and Glu423.

Belongs to the peptidase M24A family. Methionine aminopeptidase eukaryotic type 2 subfamily. It depends on Co(2+) as a cofactor. Zn(2+) serves as cofactor. Requires Mn(2+) as cofactor. The cofactor is Fe(2+).

The protein localises to the cytoplasm. It catalyses the reaction Release of N-terminal amino acids, preferentially methionine, from peptides and arylamides.. Its function is as follows. Cotranslationally removes the N-terminal methionine from nascent proteins. The N-terminal methionine is often cleaved when the second residue in the primary sequence is small and uncharged (Met-Ala-, Cys, Gly, Pro, Ser, Thr, or Val). The chain is Methionine aminopeptidase 2-1 from Talaromyces marneffei (strain ATCC 18224 / CBS 334.59 / QM 7333) (Penicillium marneffei).